A 253-amino-acid polypeptide reads, in one-letter code: Sulfate transporter CysZ (253 aa).

A run of 4 helical transmembrane segments spans residues 31 to 51, 72 to 92, 151 to 171, and 222 to 242; these read FVILPLLVNIVLMGGAFWWLF, LSYLLWPIAVISVLLVFGYFF, IVLLVLYFIPGIGQTIAPVLW, and IPVLNLFIMPVAVCGATAMWV.

It belongs to the CysZ family.

The protein localises to the cell inner membrane. In terms of biological role, high affinity, high specificity proton-dependent sulfate transporter, which mediates sulfate uptake. Provides the sulfur source for the cysteine synthesis pathway. The chain is Sulfate transporter CysZ from Salmonella paratyphi A (strain AKU_12601).